Consider the following 137-residue polypeptide: Peptide methionine sulfoxide reductase MsrB (137 aa).

One can recognise a MsrB domain in the interval 7 to 129 (AEELKKNLSD…NSASLRFTDG (123 aa)). Zn(2+)-binding residues include cysteine 46, cysteine 49, cysteine 95, and cysteine 98. Cysteine 118 acts as the Nucleophile in catalysis.

The protein belongs to the MsrB Met sulfoxide reductase family. The cofactor is Zn(2+).

The enzyme catalyses L-methionyl-[protein] + [thioredoxin]-disulfide + H2O = L-methionyl-(R)-S-oxide-[protein] + [thioredoxin]-dithiol. The protein is Peptide methionine sulfoxide reductase MsrB of Shigella dysenteriae serotype 1 (strain Sd197).